A 154-amino-acid chain; its full sequence is MASVSTHENQEKGPHLPPPSKQSLLFCPKSKLHIHRSEISKIIRECQEESFWKRALPFSLVSMLVTQGLVHHGYLAANPRFGSLPKVALAGILGFGLGKASYIGVCQSKFHSFEGQLRGAGFGPGHNRHCLLTCEECKTKHGLSQERSSQPSAS.

The tract at residues 1-23 is disordered; sequence MASVSTHENQEKGPHLPPPSKQS. Residues 1–120 form the OCIA domain; the sequence is MASVSTHENQ…HSFEGQLRGA (120 aa). Residue Lys41 is modified to N6-acetyllysine.

In terms of assembly, interacts (via OCIA domain) with OCIAD1/ASRIJ and STAT3.

It is found in the endosome. The protein resides in the mitochondrion. It localises to the mitochondrion inner membrane. In terms of biological role, has an essential role in the assembly of mitochondrial respiratory chain complex III. Is also required for STAT3 activation and plays a role in cell migration. This chain is OCIA domain-containing protein 2 (OCIAD2), found in Bos taurus (Bovine).